The following is a 457-amino-acid chain: 1-carboxybiuret hydrolase subunit AtzE (457 aa).

Catalysis depends on charge relay system residues K74 and S150. S174 functions as the Acyl-ester intermediate in the catalytic mechanism.

The protein belongs to the amidase family. Heterotetramer consisting of 2 AtzE and 2 AtzG subunits.

The enzyme catalyses 1-carboxybiuret + H2O = urea-1,3-dicarboxylate + NH4(+). It participates in xenobiotic degradation; atrazine degradation. Hydrolyzes 1-carboxybiuret to urea-1,3-dicarboxylate and NH(3). This chain is 1-carboxybiuret hydrolase subunit AtzE, found in Pseudomonas sp. (strain ADP).